Reading from the N-terminus, the 476-residue chain is Ribulose bisphosphate carboxylase large chain (476 aa).

A propeptide spanning residues 1–2 (MS) is cleaved from the precursor. An N-acetylproline modification is found at Pro3. Lys14 carries the post-translational modification N6,N6,N6-trimethyllysine. Substrate is bound by residues Asn123 and Thr173. Catalysis depends on Lys175, which acts as the Proton acceptor. A substrate-binding site is contributed by Lys177. Lys201, Asp203, and Glu204 together coordinate Mg(2+). Position 201 is an N6-carboxylysine (Lys201). Catalysis depends on His294, which acts as the Proton acceptor. Positions 295, 327, and 379 each coordinate substrate.

It belongs to the RuBisCO large chain family. Type I subfamily. As to quaternary structure, heterohexadecamer of 8 large chains and 8 small chains; disulfide-linked. The disulfide link is formed within the large subunit homodimers. It depends on Mg(2+) as a cofactor. In terms of processing, the disulfide bond which can form in the large chain dimeric partners within the hexadecamer appears to be associated with oxidative stress and protein turnover.

It is found in the plastid. The protein resides in the chloroplast. It carries out the reaction 2 (2R)-3-phosphoglycerate + 2 H(+) = D-ribulose 1,5-bisphosphate + CO2 + H2O. The enzyme catalyses D-ribulose 1,5-bisphosphate + O2 = 2-phosphoglycolate + (2R)-3-phosphoglycerate + 2 H(+). Its function is as follows. RuBisCO catalyzes two reactions: the carboxylation of D-ribulose 1,5-bisphosphate, the primary event in carbon dioxide fixation, as well as the oxidative fragmentation of the pentose substrate in the photorespiration process. Both reactions occur simultaneously and in competition at the same active site. The protein is Ribulose bisphosphate carboxylase large chain of Phaseolus vulgaris (Kidney bean).